The following is a 461-amino-acid chain: uncharacterized protein (461 aa).

Positions 1-19 (MEKCSHESGRHSAENDGKY) are enriched in basic and acidic residues. A disordered region spans residues 1-21 (MEKCSHESGRHSAENDGKYDI).

Belongs to the CapA family.

Functionally, could be involved in the biosynthesis of a cell wall component. This is an uncharacterized protein from Sinorhizobium fredii (strain NBRC 101917 / NGR234).